The chain runs to 428 residues: Kynureninase (428 aa).

Pyridoxal 5'-phosphate-binding positions include T104, T105, 132–135 (FPSD), D213, H216, and Y238. K239 bears the N6-(pyridoxal phosphate)lysine mark. Residues W267 and T295 each contribute to the pyridoxal 5'-phosphate site.

This sequence belongs to the kynureninase family. Homodimer. Pyridoxal 5'-phosphate is required as a cofactor.

The enzyme catalyses L-kynurenine + H2O = anthranilate + L-alanine + H(+). It carries out the reaction 3-hydroxy-L-kynurenine + H2O = 3-hydroxyanthranilate + L-alanine + H(+). The protein operates within amino-acid degradation; L-kynurenine degradation; L-alanine and anthranilate from L-kynurenine: step 1/1. Its pathway is cofactor biosynthesis; NAD(+) biosynthesis; quinolinate from L-kynurenine: step 2/3. In terms of biological role, catalyzes the cleavage of L-kynurenine (L-Kyn) and L-3-hydroxykynurenine (L-3OHKyn) into anthranilic acid (AA) and 3-hydroxyanthranilic acid (3-OHAA), respectively. The protein is Kynureninase of Bacillus cereus (strain ATCC 10987 / NRS 248).